The primary structure comprises 96 residues: Co-chaperonin GroES (96 aa).

It belongs to the GroES chaperonin family. Heptamer of 7 subunits arranged in a ring. Interacts with the chaperonin GroEL.

Its subcellular location is the cytoplasm. In terms of biological role, together with the chaperonin GroEL, plays an essential role in assisting protein folding. The GroEL-GroES system forms a nano-cage that allows encapsulation of the non-native substrate proteins and provides a physical environment optimized to promote and accelerate protein folding. GroES binds to the apical surface of the GroEL ring, thereby capping the opening of the GroEL channel. This Caulobacter vibrioides (strain ATCC 19089 / CIP 103742 / CB 15) (Caulobacter crescentus) protein is Co-chaperonin GroES.